We begin with the raw amino-acid sequence, 358 residues long: Peptide chain release factor 1 (358 aa).

Q235 carries the N5-methylglutamine modification.

This sequence belongs to the prokaryotic/mitochondrial release factor family. Post-translationally, methylated by PrmC. Methylation increases the termination efficiency of RF1.

It is found in the cytoplasm. In terms of biological role, peptide chain release factor 1 directs the termination of translation in response to the peptide chain termination codons UAG and UAA. This Neisseria meningitidis serogroup C (strain 053442) protein is Peptide chain release factor 1.